The chain runs to 313 residues: Porphobilinogen deaminase (313 aa).

Cysteine 242 carries the S-(dipyrrolylmethanemethyl)cysteine modification.

Belongs to the HMBS family. In terms of assembly, monomer. It depends on dipyrromethane as a cofactor.

It catalyses the reaction 4 porphobilinogen + H2O = hydroxymethylbilane + 4 NH4(+). It participates in porphyrin-containing compound metabolism; protoporphyrin-IX biosynthesis; coproporphyrinogen-III from 5-aminolevulinate: step 2/4. Its function is as follows. Tetrapolymerization of the monopyrrole PBG into the hydroxymethylbilane pre-uroporphyrinogen in several discrete steps. This is Porphobilinogen deaminase from Pseudomonas putida (strain W619).